A 292-amino-acid chain; its full sequence is MSGGLDMSLDDIIKSNRKPTGSRGRGGIGGGNNTGGRGGSGSNSGPSRRFANRVGARTAPYSRPIQQQQAHDAMWQNDVFATDASVAAAFGHHQTAVVGGGSSIETGTKLYISNLDYGVSNEDIKELFSEVGDLKRYGIHYDRSGRSKGTAEVVFSRRGDALAAVKRYNNVQLDGKLMKIEIVGTNLSAPALPILATAQIPFPTNGILGNFNENFNGNFNGNFNGNFRGRGRGGFMGRPRGGGFGGGNFRGGRGARGRGGRGSGGRGRDENVSAEDLDAELDKYHKEAMETS.

Residues 1–50 (MSGGLDMSLDDIIKSNRKPTGSRGRGGIGGGNNTGGRGGSGSNSGPSRRF) form a disordered region. Serine 2 is modified (N-acetylserine). Residues 23-42 (RGRGGIGGGNNTGGRGGSGS) show a composition bias toward gly residues. Residues 108-185 (TKLYISNLDY…KLMKIEIVGT (78 aa)) form the RRM domain. Residues 241-252 (GGGFGGGNFRGG) show a composition bias toward gly residues. The tract at residues 241-292 (GGGFGGGNFRGGRGARGRGGRGSGGRGRDENVSAEDLDAELDKYHKEAMETS) is disordered. The span at 280-292 (ELDKYHKEAMETS) shows a compositional bias: basic and acidic residues.

This sequence belongs to the ALYREF family. As to quaternary structure, interacts with RH15 and RH56.

It is found in the nucleus. The protein resides in the nucleoplasm. Functionally, export adapter involved in nuclear export of spliced and unspliced mRNA. The protein is THO complex subunit 4B (ALY2) of Arabidopsis thaliana (Mouse-ear cress).